Consider the following 1060-residue polypeptide: Valine--tRNA ligase, mitochondrial (1060 aa).

The N-terminal 15 residues, 1 to 15 (MPHLPLASFRPPLWG), are a transit peptide targeting the mitochondrion. The segment at 25–50 (PQALCTQPEPHGSPVSRRNREAKQKR) is disordered. A 'HIGH' region motif is present at residues 146–156 (PNVTGSLHIGH). N6-acetyllysine is present on lysine 548. A 'KMSKS' region motif is present at residues 659 to 663 (KMSKS). Lysine 662 is a binding site for ATP.

It belongs to the class-I aminoacyl-tRNA synthetase family.

The protein localises to the mitochondrion. It carries out the reaction tRNA(Val) + L-valine + ATP = L-valyl-tRNA(Val) + AMP + diphosphate. Functionally, catalyzes the attachment of valine to tRNA(Val) in a two-step reaction: valine is first activated by ATP to form Val-AMP and then transferred to the acceptor end of tRNA(Val). This Mus musculus (Mouse) protein is Valine--tRNA ligase, mitochondrial (Vars2).